A 473-amino-acid chain; its full sequence is RUN domain-containing protein 3B (473 aa).

The interval 1 to 24 (MASRSLGGLSGIRGGGGGGGKKSL) is disordered. Residues 8–21 (GLSGIRGGGGGGGK) are compositionally biased toward gly residues. Arginine 13 is modified (omega-N-methylarginine). In terms of domain architecture, RUN spans 57–206 (DDSSPEFNNF…IDFSFCLKGE (150 aa)). A phosphoserine mark is found at serine 232 and serine 233. Residues 317 to 342 (AHKLEKEQLEYIIVELQDQLTVLKNN) adopt a coiled-coil conformation. A compositionally biased stretch (polar residues) spans 399-422 (SLSQTSLDPGQSQEGDGKQDTLNV). Residues 399–428 (SLSQTSLDPGQSQEGDGKQDTLNVMSEGKE) are disordered.

Belongs to the RUNDC3 family. In terms of assembly, interacts with RAP2A. As to expression, isoform 2 is expressed at high levels in brain, thymus, ovary, testis, leukocyte, liver, small intestine and prostate. Isoform 1 is expressed in the brain, testis and adrenal gland. It is activated in tumorigenic breast cancer cell lines and in the primary tumor of breast cancer patients. Activation also correlates with metastatic lymph node invasion and can be detected in metastatic epithelial cells from the lymph nodes and in the bone marrow of patients.

The chain is RUN domain-containing protein 3B (RUNDC3B) from Homo sapiens (Human).